The primary structure comprises 403 residues: Forkhead box protein Q1 (403 aa).

Disordered regions lie at residues 1 to 75 and 94 to 116; these read MKLE…PGAE and GAAG…PYTR. The span at 32-48 shows a compositional bias: low complexity; that stretch reads LSAAGDDSLGSDGDCAA. The span at 96-107 shows a compositional bias: gly residues; it reads AGPGAGGAGSGE. The segment at residues 119–214 is a DNA-binding region (fork-head); sequence KPPYSYIALI…ADGVFRRRRK (96 aa). The segment at 216 to 266 is disordered; it reads LSHRAPVPAPGLRPEEAPGLPAAPPPAPAAPASPRMRSPARQEERASPAGK. A compositionally biased stretch (pro residues) spans 236–246; that stretch reads PAAPPPAPAAP.

In terms of tissue distribution, expressed predominantly in the stomach, trachea, bladder and salivary gland.

It localises to the nucleus. Its function is as follows. Plays a role in hair follicle differentiation. The chain is Forkhead box protein Q1 (FOXQ1) from Homo sapiens (Human).